Here is a 401-residue protein sequence, read N- to C-terminus: Phosrestin-1 (401 aa).

It belongs to the arrestin family. In terms of tissue distribution, inner and outer segments, and the inner plexiform regions of the retina.

In terms of biological role, undergoes light-induced phosphorylation, probably plays an important role in the photoreceptor transduction. This chain is Phosrestin-1 (Arr2), found in Drosophila miranda (Fruit fly).